The chain runs to 247 residues: Cell division protein ZapD (247 aa).

It belongs to the ZapD family. As to quaternary structure, interacts with FtsZ.

It localises to the cytoplasm. Functionally, cell division factor that enhances FtsZ-ring assembly. Directly interacts with FtsZ and promotes bundling of FtsZ protofilaments, with a reduction in FtsZ GTPase activity. In Enterobacter sp. (strain 638), this protein is Cell division protein ZapD.